We begin with the raw amino-acid sequence, 61 residues long: Small ribosomal subunit protein uS14 (61 aa).

Zn(2+)-binding residues include cysteine 24, cysteine 27, cysteine 40, and cysteine 43.

The protein belongs to the universal ribosomal protein uS14 family. Zinc-binding uS14 subfamily. In terms of assembly, part of the 30S ribosomal subunit. Contacts proteins S3 and S10. It depends on Zn(2+) as a cofactor.

Binds 16S rRNA, required for the assembly of 30S particles and may also be responsible for determining the conformation of the 16S rRNA at the A site. In Syntrophus aciditrophicus (strain SB), this protein is Small ribosomal subunit protein uS14.